A 275-amino-acid chain; its full sequence is Polyamine aminopropyltransferase (275 aa).

Residues 2-235 (ELWFTEKQTK…GLWTFTIGSK (234 aa)) form the PABS domain. Q31 lines the S-methyl-5'-thioadenosine pocket. 2 residues coordinate spermidine: H62 and D86. S-methyl-5'-thioadenosine is bound by residues E106 and 137–138 (DG). The active-site Proton acceptor is the D155. A spermidine-binding site is contributed by 155–158 (DSTE). P162 is a binding site for S-methyl-5'-thioadenosine.

The protein belongs to the spermidine/spermine synthase family. As to quaternary structure, homodimer or homotetramer.

It localises to the cytoplasm. It carries out the reaction S-adenosyl 3-(methylsulfanyl)propylamine + putrescine = S-methyl-5'-thioadenosine + spermidine + H(+). It participates in amine and polyamine biosynthesis; spermidine biosynthesis; spermidine from putrescine: step 1/1. Functionally, catalyzes the irreversible transfer of a propylamine group from the amino donor S-adenosylmethioninamine (decarboxy-AdoMet) to putrescine (1,4-diaminobutane) to yield spermidine. This chain is Polyamine aminopropyltransferase, found in Bacillus mycoides (strain KBAB4) (Bacillus weihenstephanensis).